Reading from the N-terminus, the 1774-residue chain is 6-methylsalicylic acid synthase (1774 aa).

Positions 1–14 (MHSAATSTYPSGKT) are enriched in polar residues. Positions 1–21 (MHSAATSTYPSGKTSPAPVGT) are disordered. The 426-residue stretch at 32–457 (SNDVAVVGMA…GTVSHAVIEE (426 aa)) folds into the Ketosynthase family 3 (KS3) domain. The interval 186 to 238 (RISYHLNLMGPSTAVDAACASSLVAIHHGVQAIRLGESKVAIVGGVNALCGPG) is acyltransferase. Catalysis depends on for beta-ketoacyl synthase activity residues Cys204, His339, and His379. The tract at residues 642–676 (NGITPQAVIGHSVGEIAASVVAGALSPAEGALIVT) is acetyl/malonyl transferases. The active-site For malonyltransferase activity is Ser653. The N-terminal hotdog fold stretch occupies residues 926-1045 (HTLLGQRIPV…AYWDRKVAGS (120 aa)). Positions 926–1202 (HTLLGQRIPV…FSEIEGTPGV (277 aa)) constitute a PKS/mFAS DH domain. His958 acts as the Proton acceptor; for dehydratase activity in catalysis. Positions 1059–1202 (VTKLADNFSI…FSEIEGTPGV (144 aa)) are C-terminal hotdog fold. Asp1123 acts as the Proton donor; for dehydratase activity in catalysis. Residues 1403 to 1450 (GPRLLPRPEGTYLITGGLGVLGLEVADFLVEKGARRLLLISRRALPPR) are 2-oxoacyl reductase. 1419–1424 (GLGVLG) provides a ligand contact to NADP(+). A Carrier domain is found at 1698-1772 (AYLDEKIRGC…HLAVWFAEKL (75 aa)). Ser1732 carries the post-translational modification O-(pantetheine 4'-phosphoryl)serine.

As to quaternary structure, homomultimer.

It catalyses the reaction 3 malonyl-CoA + acetyl-CoA + NADPH + 3 H(+) = 6-methylsalicylate + 3 CO2 + NADP(+) + 4 CoA + H2O. It participates in mycotoxin biosynthesis; patulin biosynthesis. Its function is as follows. This multifunctional enzyme is a polyketide synthase. It catalyzes a total of 11 steps by seven different component enzymes, in the biosynthesis of the antibiotic patulin. In Penicillium patulum (Penicillium griseofulvum), this protein is 6-methylsalicylic acid synthase.